We begin with the raw amino-acid sequence, 1769 residues long: U3 small nucleolar RNA-associated protein 10 (1769 aa).

S2 carries the post-translational modification N-acetylserine. Residues L1729–Y1767 form an HEAT repeat.

Belongs to the HEATR1/UTP10 family. In terms of assembly, interacts with snoRNA U3. Interacts with MPP10. Component of the ribosomal small subunit (SSU) processome composed of at least 40 protein subunits and snoRNA U3. In the absence of snoRNA3, forms a complex with other t-UTPs. This complex can associate with pre-18S ribosomal RNAs.

Its subcellular location is the nucleus. It localises to the nucleolus. The protein resides in the mitochondrion. Its function is as follows. Involved in nucleolar processing of pre-18S ribosomal RNA. Required for optimal pre-ribosomal RNA transcription by RNA polymerase I together with a subset of U3 proteins required for transcription (t-UTPs). Involved in ribosome biosynthesis. The sequence is that of U3 small nucleolar RNA-associated protein 10 (UTP10) from Saccharomyces cerevisiae (strain ATCC 204508 / S288c) (Baker's yeast).